Here is a 689-residue protein sequence, read N- to C-terminus: Elongation factor G (689 aa).

A tr-type G domain is found at 8 to 282; that stretch reads KKTRNIGIMA…AVIDYLPSPV (275 aa). GTP contacts are provided by residues 17-24, 81-85, and 135-138; these read AHIDAGKT, DTPGH, and NKMD.

This sequence belongs to the TRAFAC class translation factor GTPase superfamily. Classic translation factor GTPase family. EF-G/EF-2 subfamily.

It is found in the cytoplasm. Its function is as follows. Catalyzes the GTP-dependent ribosomal translocation step during translation elongation. During this step, the ribosome changes from the pre-translocational (PRE) to the post-translocational (POST) state as the newly formed A-site-bound peptidyl-tRNA and P-site-bound deacylated tRNA move to the P and E sites, respectively. Catalyzes the coordinated movement of the two tRNA molecules, the mRNA and conformational changes in the ribosome. The polypeptide is Elongation factor G (Halothermothrix orenii (strain H 168 / OCM 544 / DSM 9562)).